Consider the following 394-residue polypeptide: Ceramide glucosyltransferase (394 aa).

The Lumenal portion of the chain corresponds to Met-1 to Gly-10. A helical transmembrane segment spans residues Met-11 to Tyr-32. Topologically, residues Thr-33 to Arg-195 are cytoplasmic. Asp-92 is a short sequence motif (D1). N6-acetyllysine is present on Lys-117. Residue Asp-144 is a short sequence motif, D2. The helical transmembrane segment at Tyr-196–Met-215 threads the bilayer. Over Arg-216 to Thr-287 the chain is Lumenal. A short sequence motif (D3) is located at residue Asp-236. The active-site Proton acceptor is Asp-236. The (Q/R)XXRW motif lies at Arg-272–Trp-276. The helical transmembrane segment at Ile-288–Gly-304 threads the bilayer. At Trp-305–His-309 the chain is on the cytoplasmic side. The helical transmembrane segment at Val-310–Ile-328 threads the bilayer. Residues Phe-329 to Asp-348 are Lumenal-facing. Residues Tyr-349 to Trp-369 traverse the membrane as a helical segment. The Cytoplasmic portion of the chain corresponds to Asp-370–Val-394.

It belongs to the glycosyltransferase 2 family. As to quaternary structure, interacts with RTN1; regulates the ceramide glucosyltransferase activity of UGCG. In terms of tissue distribution, found in all tissues examined.

Its subcellular location is the golgi apparatus membrane. It catalyses the reaction an N-acylsphing-4-enine + UDP-alpha-D-glucose = a beta-D-glucosyl-(1&lt;-&gt;1')-N-acylsphing-4-enine + UDP + H(+). It carries out the reaction UDP-alpha-D-xylose + an N-acylsphing-4-enine = a beta-D-xylosyl-(1&lt;-&gt;1')-N-acylsphing-4-enine + UDP + H(+). The catalysed reaction is N-(9Z-octadecenoyl)-sphing-4-enine + UDP-alpha-D-xylose = beta-D-xylosyl-(1&lt;-&gt;1')-N-(9Z-octadecenoyl)-sphing-4-enine + UDP + H(+). The protein operates within lipid metabolism; sphingolipid metabolism. Its function is as follows. Participates in the initial step of the glucosylceramide-based glycosphingolipid/GSL synthetic pathway at the cytosolic surface of the Golgi. Catalyzes the transfer of glucose from UDP-glucose to ceramide to produce glucosylceramide/GlcCer (such as beta-D-glucosyl-(1&lt;-&gt;1')-N-acylsphing-4-enine). GlcCer is the core component of glycosphingolipids/GSLs, amphipathic molecules consisting of a ceramide lipid moiety embedded in the outer leaflet of the membrane, linked to one of hundreds of different externally oriented oligosaccharide structures. Glycosphingolipids are essential components of membrane microdomains that mediate membrane trafficking and signal transduction, implicated in many fundamental cellular processes, including growth, differentiation, migration, morphogenesis, cell-to-cell and cell-to-matrix interactions. They are required for instance in the proper development and functioning of the nervous system. As an example of their role in signal transduction, they regulate the leptin receptor/LEPR in the leptin-mediated signaling pathway. They also play an important role in the establishment of the skin barrier regulating keratinocyte differentiation and the proper assembly of the cornified envelope. The biosynthesis of GSLs is also required for the proper intestinal endocytic uptake of nutritional lipids. Catalyzes the synthesis of xylosylceramide/XylCer (such as beta-D-xylosyl-(1&lt;-&gt;1')-N-acylsphing-4-enine) using UDP-Xyl as xylose donor. The polypeptide is Ceramide glucosyltransferase (Homo sapiens (Human)).